The following is a 283-amino-acid chain: Dihydropteroate synthase type-1 (283 aa).

Residues valine 6–threonine 262 enclose the Pterin-binding domain. Asparagine 13 is a Mg(2+) binding site. (7,8-dihydropterin-6-yl)methyl diphosphate is bound by residues aspartate 86, asparagine 105, aspartate 177, lysine 216, and arginine 250–histidine 252.

It belongs to the DHPS family. As to quaternary structure, homodimer or homotrimer. Requires Mg(2+) as cofactor.

The enzyme catalyses (7,8-dihydropterin-6-yl)methyl diphosphate + 4-aminobenzoate = 7,8-dihydropteroate + diphosphate. It functions in the pathway cofactor biosynthesis; tetrahydrofolate biosynthesis; 7,8-dihydrofolate from 2-amino-4-hydroxy-6-hydroxymethyl-7,8-dihydropteridine diphosphate and 4-aminobenzoate: step 1/2. In terms of biological role, catalyzes the condensation of para-aminobenzoate (pABA) with 6-hydroxymethyl-7,8-dihydropterin diphosphate (DHPt-PP) to form 7,8-dihydropteroate (H2Pte), the immediate precursor of folate derivatives. Implicated in resistance to sulfonamide. The polypeptide is Dihydropteroate synthase type-1 (sulI) (Mycolicibacterium fortuitum (Mycobacterium fortuitum)).